The following is a 153-amino-acid chain: MYAVVQVRGVVNTRRDIKETLKMLRLHHINHCVIVPETPEYLGMIRKAKDFVAFGEVDAATLATILTTRGRLTGNKPLTEEYVKSATSYGSIEEFASALVNGEVRMKDVPELKPVLRMHPPRKGYKTTKRTYTQGGALGYYGTEINDLLIKMR.

It belongs to the universal ribosomal protein uL30 family. In terms of assembly, part of the 50S ribosomal subunit.

This chain is Large ribosomal subunit protein uL30, found in Methanocorpusculum labreanum (strain ATCC 43576 / DSM 4855 / Z).